Reading from the N-terminus, the 860-residue chain is Transcription factor E2F8 (860 aa).

2 disordered regions span residues 1 to 27 and 38 to 57; these read MENQ…PSSK and DLGP…GEPW. Serine 71 and serine 102 each carry phosphoserine. DNA-binding regions lie at residues 113–182 and 261–347; these read RKEK…TWHG and RKDK…KWTG. Disordered stretches follow at residues 407–433, 532–616, and 745–803; these read RRKI…PPVP, LTPP…PKED, and QMSA…QPVP. Phosphoserine occurs at positions 412 and 416. 2 stretches are compositionally biased toward polar residues: residues 412 to 429 and 542 to 554; these read SAPS…SQNS and VCPT…TGSK. Over residues 555 to 565 the composition is skewed to basic and acidic residues; that stretch reads DPTDAPAEKTA.

This sequence belongs to the E2F/DP family. In terms of assembly, interacts with HIF1A. Homodimer and heterodimer: mainly forms homodimers and, to a lesser extent, heterodimers with E2F8. Dimerization is important for DNA-binding. As to expression, highly expressed in liver, skin, thymus and testis. Expressed in trophoblast giant cells throughout placenta development (at protein level).

The protein resides in the nucleus. In terms of biological role, atypical E2F transcription factor that participates in various processes such as angiogenesis and polyploidization of specialized cells. Mainly acts as a transcription repressor that binds DNA independently of DP proteins and specifically recognizes the E2 recognition site 5'-TTTC[CG]CGC-3'. Directly represses transcription of classical E2F transcription factors such as E2F1: component of a feedback loop in S phase by repressing the expression of E2F1, thereby preventing p53/TP53-dependent apoptosis. Plays a key role in polyploidization of cells in placenta and liver by regulating the endocycle, probably by repressing genes promoting cytokinesis and antagonizing action of classical E2F proteins (E2F1, E2F2 and/or E2F3). Required for placental development by promoting polyploidization of trophoblast giant cells. Acts as a promoter of sprouting angiogenesis, possibly by acting as a transcription activator: associates with HIF1A, recognizes and binds the VEGFA promoter, which is different from canonical E2 recognition site, and activates expression of the VEGFA gene. The chain is Transcription factor E2F8 (E2f8) from Mus musculus (Mouse).